Consider the following 352-residue polypeptide: Ion-translocating oxidoreductase complex subunit D (352 aa).

4 helical membrane-spanning segments follow: residues 20-40, 42-62, 69-91, and 123-143; these read IMLLVVIAALPGIAAQTWFFG, GTLFQIVLAAITALVAEAIVL, VASHLQDYSALLTGLLLAVSIPP, and PAMIGYVVLLISFPVQMTSWL. The residue at position 187 (Thr-187) is an FMN phosphoryl threonine. 5 helical membrane passes run 215–235, 242–262, 267–287, 301–321, and 322–342; these read LAGVGWQWVNLAWLVGGVFLL, WHIPVSFLLTLALCAALGWLF, LASPQLHLLSGATMLGAFFIL, LIFGALAGVLVWLIRSFGGYP, and DGVAFAVLLANITVPLIDYYT.

Belongs to the NqrB/RnfD family. In terms of assembly, the complex is composed of six subunits: RsxA, RsxB, RsxC, RsxD, RsxE and RsxG. FMN is required as a cofactor.

The protein resides in the cell inner membrane. Functionally, part of a membrane-bound complex that couples electron transfer with translocation of ions across the membrane. Required to maintain the reduced state of SoxR. The chain is Ion-translocating oxidoreductase complex subunit D from Salmonella enteritidis PT4 (strain P125109).